Consider the following 216-residue polypeptide: Ribosomal RNA large subunit methyltransferase E (216 aa).

S-adenosyl-L-methionine contacts are provided by Gly67, Trp69, Asp87, Asp103, and Asp128. Lys168 serves as the catalytic Proton acceptor.

Belongs to the class I-like SAM-binding methyltransferase superfamily. RNA methyltransferase RlmE family.

It localises to the cytoplasm. The enzyme catalyses uridine(2552) in 23S rRNA + S-adenosyl-L-methionine = 2'-O-methyluridine(2552) in 23S rRNA + S-adenosyl-L-homocysteine + H(+). Functionally, specifically methylates the uridine in position 2552 of 23S rRNA at the 2'-O position of the ribose in the fully assembled 50S ribosomal subunit. In Acinetobacter baylyi (strain ATCC 33305 / BD413 / ADP1), this protein is Ribosomal RNA large subunit methyltransferase E.